The chain runs to 261 residues: 5'-nucleotidase SurE (261 aa).

A divalent metal cation is bound by residues Asp-10, Asp-11, Ser-41, and Asn-96.

Belongs to the SurE nucleotidase family. Requires a divalent metal cation as cofactor.

It is found in the cytoplasm. The enzyme catalyses a ribonucleoside 5'-phosphate + H2O = a ribonucleoside + phosphate. Nucleotidase that shows phosphatase activity on nucleoside 5'-monophosphates. This is 5'-nucleotidase SurE from Methanococcoides burtonii (strain DSM 6242 / NBRC 107633 / OCM 468 / ACE-M).